Consider the following 663-residue polypeptide: Pescadillo homolog (663 aa).

Basic and acidic residues predominate over residues 311 to 321 (QLKEDESKSDE). Disordered regions lie at residues 311 to 360 (QLKE…YSSS), 428 to 447 (TNEDGDGEDNQTAQKVGPNQ), and 504 to 663 (AQQT…AQKA). Positions 322 to 334 (TAEEDAEADDEEK) are enriched in acidic residues. The region spanning 361 to 477 (DPSQLFANFT…ELKSPELYAP (117 aa)) is the BRCT domain. Residues 501-663 (PLEAQQTEAE…KLEKEKAQKA (163 aa)) are a coiled coil. Over residues 526-567 (DGSDVENDMDVDEAEDDEEEEEGDEEDAEEAEEEDAEEDEEE) the composition is skewed to acidic residues. A compositionally biased stretch (basic and acidic residues) spans 591 to 620 (VDSKTKAKLEQRKALEKKAREEAEDLERAK).

It belongs to the pescadillo family. In terms of assembly, component of the NOP7 complex, composed of erb1, nop7 and ytm1. The complex is held together by erb1, which interacts with nop7 via its N-terminal domain and with ytm1 via a high-affinity interaction between the seven-bladed beta-propeller domains of the 2 proteins. The NOP7 complex associates with the 66S pre-ribosome.

The protein localises to the nucleus. It localises to the nucleolus. The protein resides in the nucleoplasm. In terms of biological role, component of the NOP7 complex, which is required for maturation of the 25S and 5.8S ribosomal RNAs and formation of the 60S ribosome. This Neurospora crassa (strain ATCC 24698 / 74-OR23-1A / CBS 708.71 / DSM 1257 / FGSC 987) protein is Pescadillo homolog (nop7).